A 76-amino-acid chain; its full sequence is Lividin-2 (76 aa).

A signal peptide spans 1 to 22; it reads MFTLKKSLLLLFFLGTISLSLC. A propeptide spanning residues 23-41 is cleaved from the precursor; sequence QEERNADEEDGGEVTEEEV. A disulfide bond links Cys70 and Cys76.

Expressed by the skin glands.

The protein resides in the secreted. Functionally, antimicrobial peptide. The sequence is that of Lividin-2 from Odorrana livida (Green mountain frog).